A 94-amino-acid polypeptide reads, in one-letter code: DNA-directed RNA polymerase subunit omega (94 aa).

This sequence belongs to the RNA polymerase subunit omega family. The RNAP catalytic core consists of 2 alpha, 1 beta, 1 beta' and 1 omega subunit. When a sigma factor is associated with the core the holoenzyme is formed, which can initiate transcription.

The enzyme catalyses RNA(n) + a ribonucleoside 5'-triphosphate = RNA(n+1) + diphosphate. Promotes RNA polymerase assembly. Latches the N- and C-terminal regions of the beta' subunit thereby facilitating its interaction with the beta and alpha subunits. The chain is DNA-directed RNA polymerase subunit omega from Parafrankia sp. (strain EAN1pec).